The following is a 134-amino-acid chain: Photosystem II lipoprotein Psb27 (134 aa).

Positions 1-24 are cleaved as a signal peptide; it reads MSFLKNQLSRLLALILVVAIGLTA. Residue Cys-25 is the site of N-palmitoyl cysteine attachment. Cys-25 carries the S-diacylglycerol cysteine lipid modification.

Belongs to the Psb27 family. As to quaternary structure, monomer. Forms a complex with a monomeric, partially assembled PSII. This is probably the complex in which D1 is assembled and/or replaced. Present in 6-10% of PSII complexes; mostly in monomeric PSII. These PSII do not evolve oxygen, do not have an assembled calcium-manganese-oxide cluster. Psb27-containing PSII seem to be assembly intermediates; a wild-type strain includes the intrinsic membrane proteins, Psb27, Pbs28, substoichiometric amounts of PsbO and PsbQ but no PsbU or PsbV, while a ctpA deletion mutant includes the intrinsic membrane proteins (D1 as precursor), Psb27, a very low amount of PsbO and PsbQ, but no PsbU or PsbV. Small amounts of Psb27 interact with the lumenal domain of CP43 (psbC) in wild-type and a ctpA mutant. A small amount can also be detected in monomeric and trimeric photosystem I (PSI), possibly via association with PsaB.

The protein localises to the cellular thylakoid membrane. Functionally, plays a role in the repair and/or biogenesis of the calcium-manganese-oxide cluster on the lumenal face of the thylakoid membrane. Photosystem II (PSII) complexes containing this protein are monomeric, are assembly intermediates lacking the calcium-manganese-oxide cluster and miss some of the lumenal subunits. Probably blocks binding of some of the small lumenal subunits. In Synechocystis sp. (strain ATCC 27184 / PCC 6803 / Kazusa), this protein is Photosystem II lipoprotein Psb27.